Reading from the N-terminus, the 156-residue chain is Small ribosomal subunit protein uS7 (156 aa).

It belongs to the universal ribosomal protein uS7 family. As to quaternary structure, part of the 30S ribosomal subunit. Contacts proteins S9 and S11.

In terms of biological role, one of the primary rRNA binding proteins, it binds directly to 16S rRNA where it nucleates assembly of the head domain of the 30S subunit. Is located at the subunit interface close to the decoding center, probably blocks exit of the E-site tRNA. The sequence is that of Small ribosomal subunit protein uS7 from Streptococcus pneumoniae serotype 4 (strain ATCC BAA-334 / TIGR4).